The sequence spans 487 residues: Glutamate--tRNA ligase (487 aa).

The 'HIGH' region signature appears at 12–22; that stretch reads PSPTGYMHVGN. The 'KMSKS' region motif lies at 249-253; sequence KLSKR. Lys-252 contacts ATP.

Belongs to the class-I aminoacyl-tRNA synthetase family. Glutamate--tRNA ligase type 1 subfamily. As to quaternary structure, monomer.

The protein resides in the cytoplasm. It carries out the reaction tRNA(Glu) + L-glutamate + ATP = L-glutamyl-tRNA(Glu) + AMP + diphosphate. Functionally, catalyzes the attachment of glutamate to tRNA(Glu) in a two-step reaction: glutamate is first activated by ATP to form Glu-AMP and then transferred to the acceptor end of tRNA(Glu). This Clostridium novyi (strain NT) protein is Glutamate--tRNA ligase.